Reading from the N-terminus, the 448-residue chain is tRNA modification GTPase MnmE (448 aa).

3 residues coordinate (6S)-5-formyl-5,6,7,8-tetrahydrofolate: R24, E81, and K120. In terms of domain architecture, TrmE-type G spans 216-373 (GLNVVLVGAP…LKRTLLREAG (158 aa)). Residue N226 coordinates K(+). Residues 226–231 (NVGKSS), 245–251 (TDIAGTT), and 270–273 (DTAG) contribute to the GTP site. S230 is a binding site for Mg(2+). T245, I247, and T250 together coordinate K(+). T251 contacts Mg(2+). K448 provides a ligand contact to (6S)-5-formyl-5,6,7,8-tetrahydrofolate.

This sequence belongs to the TRAFAC class TrmE-Era-EngA-EngB-Septin-like GTPase superfamily. TrmE GTPase family. As to quaternary structure, homodimer. Heterotetramer of two MnmE and two MnmG subunits. K(+) serves as cofactor.

Its subcellular location is the cytoplasm. Its function is as follows. Exhibits a very high intrinsic GTPase hydrolysis rate. Involved in the addition of a carboxymethylaminomethyl (cmnm) group at the wobble position (U34) of certain tRNAs, forming tRNA-cmnm(5)s(2)U34. This is tRNA modification GTPase MnmE from Neisseria meningitidis serogroup C (strain 053442).